The primary structure comprises 328 residues: Dof zinc finger protein PBF (328 aa).

A disordered region spans residues 33 to 56 (RDPKQTRAMPQIGGSGERKPRPQL). The Dof-type zinc finger occupies 60-114 (LKCPRCDSNNTKFCYYNNYSMSQPRYFCKACRRYWTHGGTLRNVPIGGGCRKNKH). Zn(2+)-binding residues include cysteine 62, cysteine 65, cysteine 87, and cysteine 90. 2 disordered regions span residues 124-144 (TSSS…ASSS) and 306-328 (WNKH…NKGQ).

Interacts with the bZIP transcription factor Opaque-2/O2. As to expression, seed endosperm.

Its subcellular location is the nucleus. Functionally, transcription factor that binds specifically to a 5'-AA[AG]G-3' consensus core sequence. May enhance the DNA binding of the bZIP transcription factor Opaque-2 to O2 binding site elements. The polypeptide is Dof zinc finger protein PBF (PBF) (Zea mays (Maize)).